The chain runs to 146 residues: Hemoglobin cathodic subunit beta (146 aa).

The Globin domain occupies 2-146 (EWSASERSTI…VVSALSKQYF (145 aa)). The heme b site is built by His-63 and His-92.

Belongs to the globin family. Heterotetramer of two alpha chains and two beta chains. Red blood cells.

Its function is as follows. Involved in oxygen transport from gills to the various peripheral tissues. The sequence is that of Hemoglobin cathodic subunit beta (hbb2) from Anguilla anguilla (European freshwater eel).